The chain runs to 1137 residues: DNA-directed RNA polymerase III subunit RPC2 (1137 aa).

The C4-type zinc finger occupies aspartate 1084–histidine 1099. Zn(2+)-binding residues include cysteine 1086, cysteine 1089, cysteine 1098, and cysteine 1101.

It belongs to the RNA polymerase beta chain family. As to quaternary structure, component of the RNA polymerase III (Pol III) complex consisting of 17 subunits.

It is found in the nucleus. The catalysed reaction is RNA(n) + a ribonucleoside 5'-triphosphate = RNA(n+1) + diphosphate. Functionally, DNA-dependent RNA polymerase catalyzes the transcription of DNA into RNA using the four ribonucleoside triphosphates as substrates. Second largest core component of RNA polymerase III which synthesizes small RNAs, such as 5S rRNA and tRNAs. Proposed to contribute to the polymerase catalytic activity and forms the polymerase active center together with the largest subunit. Pol III is composed of mobile elements and Polr3B is part of the core element with the central large cleft and probably a clamp element that moves to open and close the cleft. This Drosophila melanogaster (Fruit fly) protein is DNA-directed RNA polymerase III subunit RPC2.